A 181-amino-acid chain; its full sequence is MSADTKTQRLIPMGVLKGAHGVRGEVRVKSFTADPDALFTYGPLMDEAGKVLLTPITARPGKDHFIVRPKENLQKEDWDALRGCLLHASRDQLPEADEDEFYFEDLIGMPVYTVGEEPEARVRAVQNFGSGDLLEIEIPGAPATIYVPLTRADVPVIDMAAHRIVIPELSLWANQDEDDAS.

The 75-residue stretch at 98–172 (EDEFYFEDLI…RIVIPELSLW (75 aa)) folds into the PRC barrel domain.

Belongs to the RimM family. As to quaternary structure, binds ribosomal protein uS19.

Its subcellular location is the cytoplasm. In terms of biological role, an accessory protein needed during the final step in the assembly of 30S ribosomal subunit, possibly for assembly of the head region. Essential for efficient processing of 16S rRNA. May be needed both before and after RbfA during the maturation of 16S rRNA. It has affinity for free ribosomal 30S subunits but not for 70S ribosomes. This chain is Ribosome maturation factor RimM, found in Hyphomonas neptunium (strain ATCC 15444).